The chain runs to 201 residues: Dephospho-CoA kinase (201 aa).

The region spanning 4 to 201 (VIGLTGGIAS…LLDTWSNIEK (198 aa)) is the DPCK domain. An ATP-binding site is contributed by 12–17 (ASGKST).

The protein belongs to the CoaE family.

Its subcellular location is the cytoplasm. The enzyme catalyses 3'-dephospho-CoA + ATP = ADP + CoA + H(+). It functions in the pathway cofactor biosynthesis; coenzyme A biosynthesis; CoA from (R)-pantothenate: step 5/5. Catalyzes the phosphorylation of the 3'-hydroxyl group of dephosphocoenzyme A to form coenzyme A. This chain is Dephospho-CoA kinase, found in Bacillus licheniformis (strain ATCC 14580 / DSM 13 / JCM 2505 / CCUG 7422 / NBRC 12200 / NCIMB 9375 / NCTC 10341 / NRRL NRS-1264 / Gibson 46).